The primary structure comprises 318 residues: tRNA dimethylallyltransferase (318 aa).

21–28 (GPTATGKS) lines the ATP pocket. Position 23-28 (23-28 (TATGKS)) interacts with substrate. An interaction with substrate tRNA region spans residues 46–49 (DSMQ).

The protein belongs to the IPP transferase family. Monomer. It depends on Mg(2+) as a cofactor.

It catalyses the reaction adenosine(37) in tRNA + dimethylallyl diphosphate = N(6)-dimethylallyladenosine(37) in tRNA + diphosphate. Catalyzes the transfer of a dimethylallyl group onto the adenine at position 37 in tRNAs that read codons beginning with uridine, leading to the formation of N6-(dimethylallyl)adenosine (i(6)A). The polypeptide is tRNA dimethylallyltransferase (Acidothermus cellulolyticus (strain ATCC 43068 / DSM 8971 / 11B)).